The sequence spans 102 residues: Transposable element activator uncharacterized 12 kDa protein (102 aa).

Positions 24 to 51 (HNHNQNHNHSHNLNPKKKHHRRGQRSAH) are enriched in basic residues. Residues 24 to 55 (HNHNQNHNHSHNLNPKKKHHRRGQRSAHRMYG) form a disordered region.

The chain is Transposable element activator uncharacterized 12 kDa protein from Zea mays (Maize).